Consider the following 206-residue polypeptide: Small ribosomal subunit protein uS4 (206 aa).

The 64-residue stretch at 93 to 156 (CRLDNLVYRL…RKIKIIAEAL (64 aa)) folds into the S4 RNA-binding domain.

Belongs to the universal ribosomal protein uS4 family. In terms of assembly, part of the 30S ribosomal subunit. Contacts protein S5. The interaction surface between S4 and S5 is involved in control of translational fidelity.

One of the primary rRNA binding proteins, it binds directly to 16S rRNA where it nucleates assembly of the body of the 30S subunit. Functionally, with S5 and S12 plays an important role in translational accuracy. The sequence is that of Small ribosomal subunit protein uS4 from Protochlamydia amoebophila (strain UWE25).